Consider the following 260-residue polypeptide: UPF0246 protein BTH_I1090 (260 aa).

The protein belongs to the UPF0246 family.

This Burkholderia thailandensis (strain ATCC 700388 / DSM 13276 / CCUG 48851 / CIP 106301 / E264) protein is UPF0246 protein BTH_I1090.